The chain runs to 418 residues: D-inositol 3-phosphate glycosyltransferase (418 aa).

Residue His-9 participates in 1D-myo-inositol 3-phosphate binding. Residues 15-16 and Gly-23 contribute to the UDP-N-acetyl-alpha-D-glucosamine site; that span reads QP. Residues 20 to 25, Lys-78, Tyr-110, Thr-134, and Arg-154 each bind 1D-myo-inositol 3-phosphate; that span reads DSGGMN. Residues Arg-231, Lys-236, and Arg-294 each contribute to the UDP-N-acetyl-alpha-D-glucosamine site. Mg(2+) is bound by residues Tyr-303, Arg-304, and Ala-306. UDP-N-acetyl-alpha-D-glucosamine contacts are provided by Glu-316 and Glu-324. Residue Thr-330 coordinates Mg(2+).

It belongs to the glycosyltransferase group 1 family. MshA subfamily. Homodimer.

It catalyses the reaction 1D-myo-inositol 3-phosphate + UDP-N-acetyl-alpha-D-glucosamine = 1D-myo-inositol 2-acetamido-2-deoxy-alpha-D-glucopyranoside 3-phosphate + UDP + H(+). Functionally, catalyzes the transfer of a N-acetyl-glucosamine moiety to 1D-myo-inositol 3-phosphate to produce 1D-myo-inositol 2-acetamido-2-deoxy-glucopyranoside 3-phosphate in the mycothiol biosynthesis pathway. In Corynebacterium glutamicum (strain R), this protein is D-inositol 3-phosphate glycosyltransferase.